A 344-amino-acid polypeptide reads, in one-letter code: L-rhamnose-proton symporter (344 aa).

The next 10 helical transmembrane spans lie at 4 to 24 (AITM…CFYA), 38 to 58 (WSVG…ALLL), 74 to 94 (LPVF…GLTM), 101 to 121 (MGIG…TPII), 137 to 157 (TLLG…AGQL), 175 to 195 (LVLA…MNAA), 214 to 234 (LPSY…FCFI), 259 to 279 (VLLS…YAWG), 290 to 310 (ISWM…GLVL), and 323 to 343 (VLSL…IGMA).

Belongs to the L-rhamnose transporter (TC 2.A.7.6) family.

The protein resides in the cell inner membrane. The catalysed reaction is L-rhamnopyranose(in) + H(+)(in) = L-rhamnopyranose(out) + H(+)(out). Its function is as follows. Uptake of L-rhamnose across the cytoplasmic membrane with the concomitant transport of protons into the cell (symport system). The polypeptide is L-rhamnose-proton symporter (Escherichia coli (strain K12 / MC4100 / BW2952)).